Consider the following 583-residue polypeptide: Complement factor I (583 aa).

The signal sequence occupies residues 1 to 18; sequence MKLLHVFLLFLCFHLRFC. Cystine bridges form between Cys-33–Cys-255, Cys-43–Cys-54, Cys-48–Cys-59, Cys-61–Cys-93, Cys-67–Cys-86, Cys-75–Cys-106, Cys-141–Cys-181, Cys-154–Cys-214, Cys-186–Cys-196, Cys-229–Cys-247, Cys-241–Cys-256, Cys-259–Cys-271, Cys-266–Cys-284, Cys-278–Cys-293, Cys-327–Cys-453, Cys-365–Cys-381, and Cys-373–Cys-444. The region spanning 55 to 108 is the Kazal-like domain; it reads IEGTCVCKLPYQCPKNGTAVCATNRRSFPTYCQQKSLECLHPGTKFLNNGTCTA. An N-linked (GlcNAc...) asparagine glycan is attached at Asn-70. The N-linked (GlcNAc...) (complex) asparagine glycan is linked to Asn-103. The SRCR domain occupies 114 to 212; the sequence is VSLKHGNTDS…TMGYQDFADV (99 aa). Asn-177 carries an N-linked (GlcNAc...) asparagine glycan. LDL-receptor class A domains are found at residues 213 to 257 and 258 to 294; these read VCYT…LCCK and ACQG…VGCA. Ca(2+) is bound by residues Lys-239, Asp-242, Ile-244, Asp-246, Asp-252, and Glu-253. Residues Tyr-276, Asn-279, Glu-281, Asp-283, Asp-289, and Glu-290 each coordinate Ca(2+). Positions 340-574 constitute a Peptidase S1 domain; sequence IVGGKRAQLG…YFDWISYHVG (235 aa). Residues His-380 and Asp-429 each act as charge relay system in the active site. Asn-464 and Asn-494 each carry an N-linked (GlcNAc...) asparagine glycan. 3 cysteine pairs are disulfide-bonded: Cys-467/Cys-531, Cys-495/Cys-510, and Cys-521/Cys-550. The active-site Charge relay system is the Ser-525. N-linked (GlcNAc...) asparagine glycosylation occurs at Asn-536.

Belongs to the peptidase S1 family. In terms of assembly, heterodimer of a light and heavy chains; disulfide-linked. The fully processed and mature protein circulates as a zymogen, and is allosterically activated by substrate-induced remodeling of the active site. Interacts with C3b. Interacts with complement factor H. As to quaternary structure, (Microbial infection) Interacts with Staphylococcus aureus clumping factor A/ClfA; this interaction enhances cleavage of C3b into iC3b by CFI. In terms of tissue distribution, expressed in the liver by hepatocytes. Also present in other cells such as monocytes, fibroblasts or keratinocytes.

It localises to the secreted. The protein localises to the extracellular space. It carries out the reaction Inactivates complement subcomponents C3b, iC3b and C4b by proteolytic cleavage.. Its function is as follows. Trypsin-like serine protease that plays an essential role in regulating the immune response by controlling all complement pathways. Inhibits these pathways by cleaving three peptide bonds in the alpha-chain of C3b and two bonds in the alpha-chain of C4b thereby inactivating these proteins. Essential cofactors for these reactions include factor H and C4BP in the fluid phase and membrane cofactor protein/CD46 and CR1 on cell surfaces. The presence of these cofactors on healthy cells allows degradation of deposited C3b by CFI in order to prevent undesired complement activation, while in apoptotic cells or microbes, the absence of such cofactors leads to C3b-mediated complement activation and subsequent opsonization. In Homo sapiens (Human), this protein is Complement factor I (CFI).